The primary structure comprises 263 residues: Triosephosphate isomerase (263 aa).

Position 10-12 (10-12) interacts with substrate; that stretch reads NWK. Residue H104 is the Electrophile of the active site. E176 acts as the Proton acceptor in catalysis. Residues G182, S221, and 242–243 each bind substrate; that span reads GG.

The protein belongs to the triosephosphate isomerase family. As to quaternary structure, homodimer.

Its subcellular location is the cytoplasm. It carries out the reaction D-glyceraldehyde 3-phosphate = dihydroxyacetone phosphate. It participates in carbohydrate biosynthesis; gluconeogenesis. The protein operates within carbohydrate degradation; glycolysis; D-glyceraldehyde 3-phosphate from glycerone phosphate: step 1/1. Involved in the gluconeogenesis. Catalyzes stereospecifically the conversion of dihydroxyacetone phosphate (DHAP) to D-glyceraldehyde-3-phosphate (G3P). The protein is Triosephosphate isomerase of Haemophilus influenzae (strain 86-028NP).